The chain runs to 58 residues: Large ribosomal subunit protein bL32 (58 aa).

It belongs to the bacterial ribosomal protein bL32 family.

The protein is Large ribosomal subunit protein bL32 of Limosilactobacillus fermentum (strain NBRC 3956 / LMG 18251) (Lactobacillus fermentum).